The chain runs to 126 residues: Protein ApaG (126 aa).

The 125-residue stretch at 2 to 126 folds into the ApaG domain; the sequence is TELETSIKID…FRLSIPGLLH (125 aa).

The chain is Protein ApaG from Shewanella woodyi (strain ATCC 51908 / MS32).